The sequence spans 318 residues: tRNA-dihydrouridine(16) synthase (318 aa).

Residues Pro-7–Glu-9 and Gln-68 contribute to the FMN site. Residue Cys-98 is the Proton donor of the active site. FMN contacts are provided by residues Lys-139, Asn-200–Glu-202, and Cys-224–Arg-225.

It belongs to the Dus family. DusC subfamily. It depends on FMN as a cofactor.

The enzyme catalyses 5,6-dihydrouridine(16) in tRNA + NADP(+) = uridine(16) in tRNA + NADPH + H(+). The catalysed reaction is 5,6-dihydrouridine(16) in tRNA + NAD(+) = uridine(16) in tRNA + NADH + H(+). Catalyzes the synthesis of 5,6-dihydrouridine (D), a modified base found in the D-loop of most tRNAs, via the reduction of the C5-C6 double bond in target uridines. Specifically modifies U16 in tRNAs. The chain is tRNA-dihydrouridine(16) synthase from Vibrio vulnificus (strain CMCP6).